Here is a 449-residue protein sequence, read N- to C-terminus: Plasmepsin IV (449 aa).

At 1-37 (MALTVKEEEFSNTLIKNASAFDRLKLGNLKNLKIQKK) the chain is on the cytoplasmic side. A propeptide spanning residues 1–121 (MALTVKEEEF…SGYAQKGYLG (121 aa)) is cleaved from the precursor. Residues 38-58 (LQFLYLILFVLITGVFFFFLI) traverse the membrane as a helical; Signal-anchor for type II membrane protein segment. Residues 59–449 (GNFYSHRKLY…SVGFAVAKNL (391 aa)) lie on the Lumenal side of the membrane. In terms of domain architecture, Peptidase A1 spans 137–444 (FYGEGQIGTN…DYEKESVGFA (308 aa)). Residue Asp155 is part of the active site. A disulfide bridge links Cys168 with Cys173. Asp335 is a catalytic residue. Cysteines 370 and 406 form a disulfide.

It belongs to the peptidase A1 family. Component of the hemozoin formation complex (HFC) composed of falcipains FP2A and/or FP2B, plasmepsins PMII, PMIII/HAP and PMIV, heme detoxifying protein HDP and falcilysin FLN. The HFC complex is involved in hemoglobin degradation and detoxification of heme in the food vacuole during the asexual blood stage. In terms of processing, proteolytically cleaved into the soluble active mature form by cysteine proteases in the digestive vacuole of trophozoites. Proteolysis requires an acidic environment. Autoprocessing or transprocessing by other plasmepsins such as PMII may serve as an alternate activation system.

The protein resides in the membrane. It is found in the vacuole lumen. It catalyses the reaction Hydrolysis of the bonds linking certain hydrophobic residues in hemoglobin or globin. Also cleaves small molecules substrates such as Ala-Leu-Glu-Arg-Thr-Phe-|-Phe(NO2)-Ser-Phe-Pro-Thr.. Its activity is regulated as follows. Inhibited by KNI derived compounds KNI-10333 and to a lesser extent KNI-10743. Its function is as follows. During the asexual blood stage, catalyzes the cleavage of denatured host hemoglobin (Hb). Digestion of host Hb is an essential step which provides the parasite with amino acids for protein synthesis, and regulates osmolarity. The protein is Plasmepsin IV of Plasmodium falciparum (isolate 3D7).